The sequence spans 693 residues: Golgin subfamily A member 6D (693 aa).

Positions 14-611 form a coiled coil; the sequence is LEESRQNKLA…KLLELQELVL (598 aa). Disordered stretches follow at residues 20–70, 497–547, and 662–693; these read NKLA…GDSQ, LPGE…GTEQ, and VEPA…MQDT. The segment covering 537 to 547 has biased composition (basic and acidic residues); sequence LPKEKADGTEQ. Polar residues predominate over residues 674–693; that stretch reads PHNNPTVQQIVQLSPVMQDT.

The protein belongs to the GOLGA6 family.

The chain is Golgin subfamily A member 6D (GOLGA6D) from Homo sapiens (Human).